Here is a 268-residue protein sequence, read N- to C-terminus: Undecaprenyl-diphosphatase (268 aa).

Transmembrane regions (helical) follow at residues 3–23 (FFNLLEAAFLGLIEGLTEFIP), 46–66 (FEVLIQLGAILAILSVYSAKL), 84–104 (LGVLVAFLPAAVIGALAHGFI), 107–127 (VLFETPMLVCIMLIVGGFILL), 144–164 (YPLPICLAIGFIQCLAMIPGV), 185–205 (AEFSFFLAMPTMAGAFAYDLF), 213–233 (FNDGALIVVGFIMAFISGVFV), and 246–266 (FALFGWWRLIVGSAGMAALII).

This sequence belongs to the UppP family.

The protein resides in the cell inner membrane. It catalyses the reaction di-trans,octa-cis-undecaprenyl diphosphate + H2O = di-trans,octa-cis-undecaprenyl phosphate + phosphate + H(+). Its function is as follows. Catalyzes the dephosphorylation of undecaprenyl diphosphate (UPP). Confers resistance to bacitracin. This chain is Undecaprenyl-diphosphatase, found in Brucella abortus (strain S19).